We begin with the raw amino-acid sequence, 209 residues long: Auxin-binding protein ABP19b (209 aa).

The N-terminal stretch at methionine 1–alanine 18 is a signal peptide. A disulfide bridge links cysteine 24 with cysteine 39. A Cupin type-1 domain is found at serine 53–lysine 199. N-linked (GlcNAc...) asparagine glycosylation occurs at asparagine 60. Mn(2+)-binding residues include histidine 101, histidine 103, glutamate 108, and histidine 147.

The protein belongs to the germin family. In terms of assembly, interacts with ABP20.

Its subcellular location is the secreted. It localises to the extracellular space. It is found in the apoplast. The protein localises to the cell wall. In terms of biological role, probable receptor for the plant growth-promoting hormone auxin. The chain is Auxin-binding protein ABP19b (ABP19B) from Prunus persica (Peach).